The chain runs to 65 residues: Gallinacin-1 (65 aa).

The signal sequence occupies residues 1–19; it reads MRIVYLLLPFILLLAQGAA. The propeptide occupies 20 to 25; that stretch reads GSSQAL. 3 cysteine pairs are disulfide-bonded: cysteine 31–cysteine 59, cysteine 38–cysteine 53, and cysteine 43–cysteine 60.

It belongs to the beta-defensin family. Strong expression in the bone marrow, lung, testis. Moderate expression in the bursa and intestine. Low expression in the cloaca, gall bladder, brain and pancreas. Expressed in the vagina, ovarian stroma and the theca and granulosa layers of the ovarian follicle.

It is found in the secreted. The protein localises to the cytoplasmic granule. Functionally, has bactericidal activity. Potent activity against E.coli ML-35, L.monocytogenes EGD and C.albicans. In Gallus gallus (Chicken), this protein is Gallinacin-1 (GAL1).